Reading from the N-terminus, the 222-residue chain is MTERKQGAARPLNRPLVQPQGEPQKACKLPAALLYADPLPEDLVEVGYIGAAYGIRGWIKVLPHADDASALLHARRWWLLAPPQAGLVAADASRAQPVCVKIAQSREHSGTVVAQASGVADRNLAEALKGRRVWIRRADFPAPEEDEFYWVDLIGCTVSNEQGELLGEVSGLIDNGAHQILQVACVLPDGKAGERLIPFVDAFLRSVDTAGKRIVVDWGLDY.

The segment at 1–22 is disordered; that stretch reads MTERKQGAARPLNRPLVQPQGE. The PRC barrel domain maps to 145-222; sequence EDEFYWVDLI…RIVVDWGLDY (78 aa).

This sequence belongs to the RimM family. As to quaternary structure, binds ribosomal protein uS19.

It localises to the cytoplasm. In terms of biological role, an accessory protein needed during the final step in the assembly of 30S ribosomal subunit, possibly for assembly of the head region. Essential for efficient processing of 16S rRNA. May be needed both before and after RbfA during the maturation of 16S rRNA. It has affinity for free ribosomal 30S subunits but not for 70S ribosomes. The protein is Ribosome maturation factor RimM of Cupriavidus necator (strain ATCC 17699 / DSM 428 / KCTC 22496 / NCIMB 10442 / H16 / Stanier 337) (Ralstonia eutropha).